Reading from the N-terminus, the 589-residue chain is Capsid scaffolding protein (589 aa).

Catalysis depends on charge relay system residues His-47, Ser-118, and His-142. The span at 264–273 (EKERPKEPEQ) shows a compositional bias: basic and acidic residues. Residues 264-283 (EKERPKEPEQSHVPTESMSH) form a disordered region. Positions 307 to 326 (HDGVYLPKDAFFSLIGASRP) are interaction with pAP. 2 disordered regions span residues 421–478 (RSRS…GDRY) and 514–552 (ASPTTTTSHQAEASEPQASTAAAAPSTASSHGSKSAERG). Short sequence motifs (nuclear localization signal) lie at residues 428–433 (KRRRER) and 453–459 (KARKRLK). The span at 453–462 (KARKRLKAHH) shows a compositional bias: basic residues. Low complexity predominate over residues 514 to 543 (ASPTTTTSHQAEASEPQASTAAAAPSTASS). The interaction with major capsid protein stretch occupies residues 569-589 (PPKDMVDLNRRLFVAALNKME).

The protein belongs to the herpesviridae capsid scaffolding protein family. As to quaternary structure, homomultimer. Interacts with major capsid protein. Exists in a monomer-dimer equilibrium with the dimer being the active species. Post-translationally, capsid scaffolding protein is cleaved by assemblin after formation of the spherical procapsid. As a result, the capsid obtains its mature, icosahedral shape. Cleavages occur at two or more sites: release (R-site) and maturation (M-site).

The protein localises to the host cytoplasm. Its subcellular location is the host nucleus. The catalysed reaction is Cleaves -Ala-|-Ser- and -Ala-|-Ala- bonds in the scaffold protein.. In terms of biological role, acts as a scaffold protein by binding major capsid protein in the cytoplasm, inducing the nuclear localization of both proteins. Multimerizes in the nucleus such as major capsid protein forms the icosahedral T=16 capsid. Autocatalytic cleavage releases the assembly protein, and subsequently abolishes interaction with major capsid protein. Cleavages products are evicted from the capsid before or during DNA packaging. Its function is as follows. Protease that plays an essential role in virion assembly within the nucleus. Catalyzes the cleavage of the assembly protein after formation of the spherical procapsid. By that cleavage, the capsid matures and gains its icosahedral shape. The cleavage sites seem to include -Ala-Ser-, -Ala-Ala-, as well as Ala-Thr bonds. Assemblin and cleavages products are evicted from the capsid before or during DNA packaging. Functionally, plays a major role in capsid assembly. Acts as a scaffold protein by binding major capsid protein. Multimerizes in the nucleus such as major capsid protein forms the icosahedral T=16 capsid. Cleaved by assemblin after capsid completion. The cleavages products are evicted from the capsid before or during DNA packaging. The sequence is that of Capsid scaffolding protein (UL80) from Simian cytomegalovirus (strain Colburn).